A 120-amino-acid chain; its full sequence is Small ribosomal subunit protein bS16 (120 aa).

Residues 80 to 120 (GLKKRPARNNPHKGEPGKKAQERIAAAKQAAEDAKAAEASA) are disordered. The span at 81-90 (LKKRPARNNP) shows a compositional bias: basic residues. 2 stretches are compositionally biased toward basic and acidic residues: residues 91–101 (HKGEPGKKAQE) and 109–120 (AAEDAKAAEASA).

The protein belongs to the bacterial ribosomal protein bS16 family.

This is Small ribosomal subunit protein bS16 from Bartonella bacilliformis (strain ATCC 35685 / KC583 / Herrer 020/F12,63).